The sequence spans 334 residues: MRIGHHQLTNCLIAAPMAGITDRPFRTLCHAMGAGMAVSEMLSSNPEVWRTDKSRLRMVHSDEPGIRSVQIAGCDPDDMAAAARINVASGAQLIDINMGCPAKKVNRKLAGSALLQYPDLVKRILHAVVDAVDVPVTLKIRTGWAPEHRNCVEIAQLAEDCGIQALTIHGRTRACLFNGDAEYDSIRAVKQSVSIPIIANGDITDPHKARAVLDYTGADALMIGRAAQGRPWIFREIQHYLDTGELLPPLPLGEVKRLLIGHIRELHGFYGQGKGFRIARKHVSWYLQEHAPNDQFRRTFNAIEDASEQLEALEAYFENLSVKKELTELCSNNE.

FMN contacts are provided by residues 16-18 and Q70; that span reads PMA. C100 acts as the Proton donor in catalysis. Residues K139, 200–202, and 224–225 contribute to the FMN site; these read NGD and GR.

This sequence belongs to the Dus family. DusB subfamily. It depends on FMN as a cofactor.

It catalyses the reaction a 5,6-dihydrouridine in tRNA + NAD(+) = a uridine in tRNA + NADH + H(+). The enzyme catalyses a 5,6-dihydrouridine in tRNA + NADP(+) = a uridine in tRNA + NADPH + H(+). Functionally, catalyzes the synthesis of 5,6-dihydrouridine (D), a modified base found in the D-loop of most tRNAs, via the reduction of the C5-C6 double bond in target uridines. In Serratia marcescens, this protein is tRNA-dihydrouridine synthase B.